The chain runs to 701 residues: Mediator of RNA polymerase II transcription subunit 25 (701 aa).

Disordered stretches follow at residues 277–388 (AAQK…GAQQ) and 580–617 (AAAT…NPGA). The span at 286–306 (ANQQQKNRFGQISTPPFSQSP) shows a compositional bias: polar residues. Low complexity-rich tracts occupy residues 314–367 (PSLS…NNQQ) and 593–604 (APPNQVQGQAQA). The short motif at 621-625 (LRSLL) is the LXXLL motif element. Residues 650–689 (APGGGAQMQPQWRQPHQGPLMVPTGPRGPVTQNPGMPSVS) are disordered. The span at 679-689 (VTQNPGMPSVS) shows a compositional bias: polar residues.

This sequence belongs to the Mediator complex subunit 25 family. As to quaternary structure, component of the Mediator complex.

It localises to the nucleus. Its function is as follows. Component of the Mediator complex, a coactivator involved in the regulated transcription of nearly all RNA polymerase II-dependent genes. Mediator functions as a bridge to convey information from gene-specific regulatory proteins to the basal RNA polymerase II transcription machinery. Mediator is recruited to promoters by direct interactions with regulatory proteins and serves as a scaffold for the assembly of a functional preinitiation complex with RNA polymerase II and the general transcription factors. In Danio rerio (Zebrafish), this protein is Mediator of RNA polymerase II transcription subunit 25 (med25).